Reading from the N-terminus, the 509-residue chain is MPLRGLAKAKNFTLGPTAPMKTFTENVHSQNNEINNLKKIDKTHNLTNNSQNEKLYKYESQIKSSFDRIVPTLKEIARIQHHEDFINTAQSISKQNLGINLPTHILDKSWVKPLDMRALYAWCAFKQHEKLSDNFFENDPLEGSFGSPNANNFETALLDCGIHLLDITPCSDGRLAHSVAYVMRIPFSAVRRRSHAGALFDIENTVNRWVKTEHKRYRENNPNEAHEDTRYLKIVTYHFSSVDPLHQGCAAHGSDDKLAAKEGSEKLLAFKEAVENSFCCGASVDLMLIGLDTDTDSLKIHLSSSDGKIDLENTISSLDIYNSTINFSKDEAEKEICQIISGNSNKVQLKGLDKFVYKLIVNNISQIDYVKKFHKGSYEDIGHAERFIGVGIGFKEVHLRNLTYFAHLDTVEEGAPDLDVGVKIFTGLNVSQDLPIPIVIRFDYSGKVPGAKERAAKDCYRVNNAISIRYKSLVDKGLLHTCLTIRDRDNIHSAQIIGMSLDQKTKEAH.

Residue cysteine 170 coordinates Zn(2+). Aspartate 172 serves as the catalytic Proton acceptor. Histidine 238 and cysteine 249 together coordinate Zn(2+).

The protein belongs to the beta-class carbonic anhydrase family. CsoSCA subfamily. As to quaternary structure, homodimer. Zn(2+) serves as cofactor.

It is found in the carboxysome. It catalyses the reaction hydrogencarbonate + H(+) = CO2 + H2O. Its function is as follows. Reversible hydration of carbon dioxide. Essential for photosynthetic carbon dioxide fixation, supplies CO(2) to RuBisCO (ribulose bisphosphate carboxylase, cbbL-cbbS) in the carboxysome. There are estimated to be 29 CsoSCA oligomers per carboxysome. This is Carboxysome shell carbonic anhydrase from Prochlorococcus marinus subsp. pastoris (strain CCMP1986 / NIES-2087 / MED4).